The chain runs to 522 residues: Maturase K (522 aa).

It belongs to the intron maturase 2 family. MatK subfamily.

The protein resides in the plastid. Its subcellular location is the chloroplast. Functionally, usually encoded in the trnK tRNA gene intron. Probably assists in splicing its own and other chloroplast group II introns. The protein is Maturase K of Iris orientalis (Yellowband iris).